The primary structure comprises 198 residues: MTGKEDNDACVLHDKSLKLVLKSRSIVIAGEITKDVSRLFQEKILLLEALDFKKPIFVYIDSEGGDIDAGFAIFNMIRFVKPKVFTVGVGLVASAAALIFLAAKLENRFSLPFARYLLHQPLSGFKGVATDIEIYTNELNKVKKELNNIISKETGQKISKIEKDTDRDFWLDSSAAKKYGLVFEVVETKYQLEEFISA.

Ser-94 functions as the Nucleophile in the catalytic mechanism. His-119 is an active-site residue.

Belongs to the peptidase S14 family. As to quaternary structure, fourteen ClpP subunits assemble into 2 heptameric rings which stack back to back to give a disk-like structure with a central cavity, resembling the structure of eukaryotic proteasomes.

It is found in the cytoplasm. It carries out the reaction Hydrolysis of proteins to small peptides in the presence of ATP and magnesium. alpha-casein is the usual test substrate. In the absence of ATP, only oligopeptides shorter than five residues are hydrolyzed (such as succinyl-Leu-Tyr-|-NHMec, and Leu-Tyr-Leu-|-Tyr-Trp, in which cleavage of the -Tyr-|-Leu- and -Tyr-|-Trp bonds also occurs).. Functionally, cleaves peptides in various proteins in a process that requires ATP hydrolysis. Has a chymotrypsin-like activity. Plays a major role in the degradation of misfolded proteins. This chain is ATP-dependent Clp protease proteolytic subunit 2, found in Borreliella burgdorferi (strain ATCC 35210 / DSM 4680 / CIP 102532 / B31) (Borrelia burgdorferi).